Consider the following 552-residue polypeptide: Glutamine-dependent NAD(+) synthetase (552 aa).

Residues 11–253 (LRIAMAQFDF…DQWLVVDYAA (243 aa)) form the CN hydrolase domain. The active-site Proton acceptor; for glutaminase activity is the glutamate 52. Residue lysine 119 is the For glutaminase activity of the active site. Position 125 (tyrosine 125) interacts with L-glutamine. Residue cysteine 157 is the Nucleophile; for glutaminase activity of the active site. Residues serine 183 and lysine 189 each contribute to the L-glutamine site. The ligase stretch occupies residues 275–552 (AWRAVVRGLK…YPITNGYSGQ (278 aa)). 298–305 (GLSGGIDS) provides a ligand contact to ATP. Asparagine 381 contributes to the deamido-NAD(+) binding site. Threonine 405 contributes to the ATP binding site. Deamido-NAD(+) contacts are provided by glutamate 410 and lysine 522.

This sequence in the C-terminal section; belongs to the NAD synthetase family.

It carries out the reaction deamido-NAD(+) + L-glutamine + ATP + H2O = L-glutamate + AMP + diphosphate + NAD(+) + H(+). The protein operates within cofactor biosynthesis; NAD(+) biosynthesis; NAD(+) from deamido-NAD(+) (L-Gln route): step 1/1. Functionally, catalyzes the ATP-dependent amidation of deamido-NAD to form NAD. Uses L-glutamine as a nitrogen source. This chain is Glutamine-dependent NAD(+) synthetase, found in Xanthomonas campestris pv. campestris (strain 8004).